Reading from the N-terminus, the 141-residue chain is Molybdopterin synthase catalytic subunit 2 (141 aa).

Residues 37–39, 103–104, lysine 119, and 126–128 each bind substrate; these read MIR, HR, and KHQ.

Belongs to the MoaE family. As to quaternary structure, heterotetramer of 2 MoaD subunits and 2 MoaE subunits. Also stable as homodimer. The enzyme changes between these two forms during catalysis.

The catalysed reaction is 2 [molybdopterin-synthase sulfur-carrier protein]-C-terminal-Gly-aminoethanethioate + cyclic pyranopterin phosphate + H2O = molybdopterin + 2 [molybdopterin-synthase sulfur-carrier protein]-C-terminal Gly-Gly + 2 H(+). The protein operates within cofactor biosynthesis; molybdopterin biosynthesis. Its function is as follows. Converts molybdopterin precursor Z into molybdopterin. This requires the incorporation of two sulfur atoms into precursor Z to generate a dithiolene group. The sulfur is provided by MoaD. In Mycobacterium tuberculosis (strain CDC 1551 / Oshkosh), this protein is Molybdopterin synthase catalytic subunit 2 (moaE2).